The sequence spans 92 residues: Serine protease inhibitor I/II (92 aa).

The signal sequence occupies residues 1 to 19; it reads MKLALALCAAFLLVVLVQA. Pacifastin domains follow at residues 20–54 and 57–92; these read EQEC…CPPH and EVTC…CPQK. 6 disulfides stabilise this stretch: Cys-23–Cys-38, Cys-33–Cys-51, Cys-36–Cys-46, Cys-60–Cys-75, Cys-70–Cys-89, and Cys-73–Cys-84.

Belongs to the protease inhibitor I19 family. Expressed in hemolymph, ovaries, testes and fat body of adults but are absent in the gut. Also present in larval hemolymph and fat body.

The protein resides in the secreted. In terms of biological role, in vitro, is active against alpha-chymotrypsin and trypsin. In vitro, is active against alpha-chymotrypsin and pancreatic elastase. This is Serine protease inhibitor I/II from Schistocerca gregaria (Desert locust).